A 1328-amino-acid polypeptide reads, in one-letter code: ABC transporter G family member 2 (1328 aa).

The ABC transporter 1 domain occupies 53–299; the sequence is VTARNLSMSI…FEGLGFKLPK (247 aa). Residue 91-98 coordinates ATP; sequence GSPGCGKT. Residues 388-665 form the ABC transmembrane type-2 1 domain; the sequence is ISSQVAVRMR…FGMYFFLKNV (278 aa). 7 helical membrane passes run 398 to 418, 428 to 448, 477 to 497, 504 to 524, 534 to 554, 559 to 579, and 642 to 662; these read IIKS…LDLN, LIFF…AILF, IPIA…MCGL, FIYF…FFKM, LASV…GFMA, IGGW…FEGL, and IDLL…YFFL. The interval 670–691 is disordered; it reads RASDPKNDKRSKKASKRSKKIK. Positions 678-689 are enriched in basic residues; sequence KRSKKASKRSKK. The ABC transporter 2 domain maps to 721–960; it reads VYEVDVKKDG…DLLGYFENHG (240 aa). 755-762 serves as a coordination point for ATP; it reads GPSGAGKS. Positions 1049-1286 constitute an ABC transmembrane type-2 2 domain; the sequence is VRRVQNIRTR…PICPITNGNQ (238 aa). 6 helical membrane passes run 1059–1076, 1087–1107, 1128–1148, 1172–1192, 1197–1217, and 1303–1323; these read LMRS…FVRM, VSIL…SIPI, IYLF…AIIY, FISF…ATVL, IAHA…GFMI, and AVIF…LKFI.

The protein belongs to the ABC transporter superfamily. ABCG family. PDR (TC 3.A.1.205) subfamily.

The protein localises to the endosome membrane. In terms of biological role, required for endocytosis and endosomal pH regulation. In Dictyostelium discoideum (Social amoeba), this protein is ABC transporter G family member 2 (abcG2).